Here is a 266-residue protein sequence, read N- to C-terminus: Translation initiation factor 2 subunit alpha (266 aa).

Residues 12–83 (GEILIATVKQ…RKGTVDVSLK (72 aa)) enclose the S1 motif domain.

It belongs to the eIF-2-alpha family. Heterotrimer composed of an alpha, a beta and a gamma chain.

EIF-2 functions in the early steps of protein synthesis by forming a ternary complex with GTP and initiator tRNA. The chain is Translation initiation factor 2 subunit alpha from Saccharolobus solfataricus (strain ATCC 35092 / DSM 1617 / JCM 11322 / P2) (Sulfolobus solfataricus).